We begin with the raw amino-acid sequence, 286 residues long: Flagellin FlaB1 (286 aa).

The required for interaction with FliW stretch occupies residues 231–286 (LDIAAENLQAAESRIRDANIAKQMVEYTKNQVLTQSGTAMLAQANTSAQSILSILR).

It belongs to the bacterial flagellin family. As to quaternary structure, the flagellum consists of an outer layer composed of repeating units of FlaA around a core that contains several antigenically related polypeptides. Interacts via its C-terminus with FliW; a synthetic peptide of residues 229-247 partially blocks binding to FliW.

It localises to the periplasmic flagellum. The protein localises to the periplasm. In terms of biological role, component of the core of the flagella. The sequence is that of Flagellin FlaB1 (flaB1) from Treponema pallidum (strain Nichols).